Here is a 61-residue protein sequence, read N- to C-terminus: Small ribosomal subunit protein eS30A (61 aa).

The segment at 1 to 36 is disordered; the sequence is MGKVHGSLARAGKVKSQTPKVEKQEKPKQPKGRAYK.

Belongs to the eukaryotic ribosomal protein eS30 family. Component of the small ribosomal subunit (SSU). Mature yeast ribosomes consist of a small (40S) and a large (60S) subunit. The 40S small subunit contains 1 molecule of ribosomal RNA (18S rRNA) and at least 33 different proteins. The large 60S subunit contains 3 rRNA molecules (25S, 5.8S and 5S rRNA) and at least 46 different proteins.

It is found in the cytoplasm. It localises to the nucleus. Component of the ribosome, a large ribonucleoprotein complex responsible for the synthesis of proteins in the cell. The small ribosomal subunit (SSU) binds messenger RNAs (mRNAs) and translates the encoded message by selecting cognate aminoacyl-transfer RNA (tRNA) molecules. The large subunit (LSU) contains the ribosomal catalytic site termed the peptidyl transferase center (PTC), which catalyzes the formation of peptide bonds, thereby polymerizing the amino acids delivered by tRNAs into a polypeptide chain. The nascent polypeptides leave the ribosome through a tunnel in the LSU and interact with protein factors that function in enzymatic processing, targeting, and the membrane insertion of nascent chains at the exit of the ribosomal tunnel. This chain is Small ribosomal subunit protein eS30A (rps3001), found in Schizosaccharomyces pombe (strain 972 / ATCC 24843) (Fission yeast).